The sequence spans 279 residues: Zinc finger CCCH domain-containing protein 42 (279 aa).

A disordered region spans residues 11 to 77 (SDHRSSSTPM…KAAVEPQEYP (67 aa)). A compositionally biased stretch (low complexity) spans 16–39 (SSTPMATTTSSSASDPAAISPTPS). C3H1-type zinc fingers lie at residues 79-107 (RPGV…HPAK), 120-148 (RPGE…HPPD), and 186-214 (RPGT…HPNS).

The polypeptide is Zinc finger CCCH domain-containing protein 42 (Oryza sativa subsp. japonica (Rice)).